The chain runs to 251 residues: Anamorsin homolog (251 aa).

The segment at 1–154 (MINFSNTLVI…AENPDFNKSD (154 aa)) is N-terminal SAM-like domain. Residues 155–167 (DDNNLVSSDEEIY) are linker. Residues cysteine 170, cysteine 181, cysteine 184, and cysteine 186 each contribute to the [2Fe-2S] cluster site. The interval 170 to 186 (CEDKKKVVNRVCDNCTC) is fe-S binding site A. [4Fe-4S] cluster is bound by residues cysteine 216, cysteine 219, cysteine 227, and cysteine 230. 2 short sequence motifs (cx2C motif) span residues 216 to 219 (CGNC) and 227 to 230 (CGSC). The fe-S binding site B stretch occupies residues 216–230 (CGNCYLGDAFRCGSC).

The protein belongs to the anamorsin family. As to quaternary structure, monomer. [2Fe-2S] cluster serves as cofactor. Requires [4Fe-4S] cluster as cofactor.

It is found in the cytoplasm. Its subcellular location is the mitochondrion intermembrane space. Its function is as follows. Component of the cytosolic iron-sulfur (Fe-S) protein assembly (CIA) machinery. Required for the maturation of extramitochondrial Fe-S proteins. Part of an electron transfer chain functioning in an early step of cytosolic Fe-S biogenesis, facilitating the de novo assembly of a [4Fe-4S] cluster on the cytosolic Fe-S scaffold complex. Electrons are transferred from NADPH via a FAD- and FMN-containing diflavin oxidoreductase. Together with the diflavin oxidoreductase, also required for the assembly of the diferric tyrosyl radical cofactor of ribonucleotide reductase (RNR), probably by providing electrons for reduction during radical cofactor maturation in the catalytic small subunit. The chain is Anamorsin homolog from Plasmodium yoelii yoelii.